Reading from the N-terminus, the 805-residue chain is Zinc finger X-chromosomal protein (805 aa).

Ser-274 carries the post-translational modification Phosphoserine. 13 C2H2-type zinc fingers span residues 425-447 (YPCM…MKNH), 456-478 (YRCT…LESH), 488-510 (IECD…KMVH), 519-542 (HKCK…LAVH), 548-570 (HICV…MRIH), 576-599 (YQCQ…KTKH), 605-627 (FKCD…ALIH), 633-656 (HQCL…ISVH), 662-684 (HKCD…VAAH), 690-713 (HQCR…LSVH), 719-741 (FRCK…MKTH), 747-770 (YQCE…ISIH), and 776-798 (HRCE…IMRH).

The protein belongs to the krueppel C2H2-type zinc-finger protein family. ZFX/ZFY subfamily.

Its subcellular location is the nucleus. In terms of biological role, probable transcriptional activator. The sequence is that of Zinc finger X-chromosomal protein (ZFX) from Homo sapiens (Human).